The chain runs to 476 residues: Aspartyl/glutamyl-tRNA(Asn/Gln) amidotransferase subunit B 1 (476 aa).

The protein belongs to the GatB/GatE family. GatB subfamily. Heterotrimer of A, B and C subunits.

It carries out the reaction L-glutamyl-tRNA(Gln) + L-glutamine + ATP + H2O = L-glutaminyl-tRNA(Gln) + L-glutamate + ADP + phosphate + H(+). The enzyme catalyses L-aspartyl-tRNA(Asn) + L-glutamine + ATP + H2O = L-asparaginyl-tRNA(Asn) + L-glutamate + ADP + phosphate + 2 H(+). Its function is as follows. Allows the formation of correctly charged Asn-tRNA(Asn) or Gln-tRNA(Gln) through the transamidation of misacylated Asp-tRNA(Asn) or Glu-tRNA(Gln) in organisms which lack either or both of asparaginyl-tRNA or glutaminyl-tRNA synthetases. The reaction takes place in the presence of glutamine and ATP through an activated phospho-Asp-tRNA(Asn) or phospho-Glu-tRNA(Gln). The sequence is that of Aspartyl/glutamyl-tRNA(Asn/Gln) amidotransferase subunit B 1 (gatB1) from Clostridium acetobutylicum (strain ATCC 824 / DSM 792 / JCM 1419 / IAM 19013 / LMG 5710 / NBRC 13948 / NRRL B-527 / VKM B-1787 / 2291 / W).